Consider the following 354-residue polypeptide: Probable cinnamyl alcohol dehydrogenase 1 (354 aa).

Residue Cys-47 coordinates Zn(2+). Residue Ser-49 coordinates NADP(+). Zn(2+) contacts are provided by His-69, Glu-70, Cys-100, Cys-103, Cys-106, Cys-114, and Cys-163. Residues Thr-167, 188 to 193 (GLGGVG), 211 to 216 (SSSDKK), Thr-251, Gly-275, and 296 to 298 (SFI) contribute to the NADP(+) site.

It belongs to the zinc-containing alcohol dehydrogenase family. As to quaternary structure, homodimer. The cofactor is Zn(2+).

The catalysed reaction is (E)-cinnamyl alcohol + NADP(+) = (E)-cinnamaldehyde + NADPH + H(+). The enzyme catalyses (E)-coniferol + NADP(+) = (E)-coniferaldehyde + NADPH + H(+). It carries out the reaction (E)-sinapyl alcohol + NADP(+) = (E)-sinapaldehyde + NADPH + H(+). It catalyses the reaction (E)-4-coumaroyl alcohol + NADP(+) = (E)-4-coumaraldehyde + NADPH + H(+). The catalysed reaction is (E)-caffeyl alcohol + NADP(+) = (E)-caffeyl aldehyde + NADPH + H(+). It participates in aromatic compound metabolism; phenylpropanoid biosynthesis. Functionally, involved in lignin biosynthesis. Catalyzes the final step specific for the production of lignin monomers. Catalyzes the NADPH-dependent reduction of coniferaldehyde, 5-hydroxyconiferaldehyde, sinapaldehyde, 4-coumaraldehyde and caffeyl aldehyde to their respective alcohols. The chain is Probable cinnamyl alcohol dehydrogenase 1 (CAD1) from Eucalyptus gunnii (Cider gum).